Consider the following 73-residue polypeptide: Translation initiation factor IF-1 (73 aa).

Residues 1–73 enclose the S1-like domain; it reads MGKKEEAFEV…TKGRIVYRER (73 aa).

It belongs to the IF-1 family. In terms of assembly, component of the 30S ribosomal translation pre-initiation complex which assembles on the 30S ribosome in the order IF-2 and IF-3, IF-1 and N-formylmethionyl-tRNA(fMet); mRNA recruitment can occur at any time during PIC assembly.

The protein localises to the cytoplasm. Its function is as follows. One of the essential components for the initiation of protein synthesis. Stabilizes the binding of IF-2 and IF-3 on the 30S subunit to which N-formylmethionyl-tRNA(fMet) subsequently binds. Helps modulate mRNA selection, yielding the 30S pre-initiation complex (PIC). Upon addition of the 50S ribosomal subunit IF-1, IF-2 and IF-3 are released leaving the mature 70S translation initiation complex. The protein is Translation initiation factor IF-1 of Rhodopirellula baltica (strain DSM 10527 / NCIMB 13988 / SH1).